Consider the following 436-residue polypeptide: MTASVNVIGAGLAGSEAAWQIANQGVKVRLYEMRPQKLTPAHHNENFAELVCTNSLRANRLTNAAGLLKEEMRTFNSIIMESADKHSVPAGGALAVDRETFSKEVTEKLHNHPNVEIINEEIDEIPEGLTVIATGPLTSDALAKDITKFTGSDGLFFFDAAAPILEKSSLDMDKVYLKSRYDKGEAAYLNAPMTKDEFYNFYNELIKAETAELHDFEDDKFFEGCMPIEEIASRGAQTMLYGPLKPVGLEDPRTGKEPFAVVQLRQDNAAGDLYNIVGFQTHLKWGEQKRVFSMIPGLENARFVRYGVMHRNTFLCSPEVMQATYQTKKRLDLFFAGQMTGVEGYVESAASGLYAGLNAARIAQGKDPVIFPEETMMGAMAHYITHASVKNFQPINANFGIVPKLQERIRNKQERNLKISERAIDRIKKFKNLNFD.

9–14 (GAGLAG) serves as a coordination point for FAD.

The protein belongs to the MnmG family. TrmFO subfamily. FAD serves as cofactor.

The protein localises to the cytoplasm. The enzyme catalyses uridine(54) in tRNA + (6R)-5,10-methylene-5,6,7,8-tetrahydrofolate + NADH + H(+) = 5-methyluridine(54) in tRNA + (6S)-5,6,7,8-tetrahydrofolate + NAD(+). It catalyses the reaction uridine(54) in tRNA + (6R)-5,10-methylene-5,6,7,8-tetrahydrofolate + NADPH + H(+) = 5-methyluridine(54) in tRNA + (6S)-5,6,7,8-tetrahydrofolate + NADP(+). Its function is as follows. Catalyzes the folate-dependent formation of 5-methyl-uridine at position 54 (M-5-U54) in all tRNAs. In Ligilactobacillus salivarius (strain UCC118) (Lactobacillus salivarius), this protein is Methylenetetrahydrofolate--tRNA-(uracil-5-)-methyltransferase TrmFO.